Here is a 485-residue protein sequence, read N- to C-terminus: Cysteine--tRNA ligase (485 aa).

Zn(2+) is bound at residue Cys-27. Positions 29-39 (ITAYDLCHIGH) match the 'HIGH' region motif. Zn(2+) is bound by residues Cys-208, His-233, and Glu-237. The short motif at 265-269 (KMSKS) is the 'KMSKS' region element. Lys-268 provides a ligand contact to ATP.

It belongs to the class-I aminoacyl-tRNA synthetase family. As to quaternary structure, monomer. It depends on Zn(2+) as a cofactor.

Its subcellular location is the cytoplasm. It catalyses the reaction tRNA(Cys) + L-cysteine + ATP = L-cysteinyl-tRNA(Cys) + AMP + diphosphate. The sequence is that of Cysteine--tRNA ligase from Nitratidesulfovibrio vulgaris (strain DP4) (Desulfovibrio vulgaris).